Reading from the N-terminus, the 195-residue chain is Killer cell lectin-like receptor subfamily G member 1 (195 aa).

The Cytoplasmic segment spans residues M1–L38. An ITIM motif motif is present at residues V5–L10. A helical; Signal-anchor for type II membrane protein transmembrane segment spans residues V39–I59. The Extracellular segment spans residues L60 to F195. N-linked (GlcNAc...) asparagine glycosylation occurs at N65. An intrachain disulfide couples C75 to C86. The region spanning Y82 to K185 is the C-type lectin domain. N-linked (GlcNAc...) asparagine glycans are attached at residues N97, N137, and N150. 2 cysteine pairs are disulfide-bonded: C103/C184 and C163/C176.

As to quaternary structure, forms a monomer and homodimer; disulfide-linked. Interacts (via ITIM motif) with PTPN11 and INPP5D. Expressed specifically on natural killer (NK) cells and T-cells, mainly CD8 T-cells.

It localises to the cell membrane. Plays an inhibitory role on natural killer (NK) cells and T-cell functions upon binding to their non-MHC ligands. May mediate missing self recognition by binding to a highly conserved site on classical cadherins, enabling it to monitor expression of E-cadherin/CDH1, N-cadherin/CDH2 and R-cadherin/CDH4 on target cells. This Homo sapiens (Human) protein is Killer cell lectin-like receptor subfamily G member 1 (KLRG1).